A 117-amino-acid polypeptide reads, in one-letter code: Large ribosomal subunit protein bL20c (117 aa).

It belongs to the bacterial ribosomal protein bL20 family.

Its subcellular location is the plastid. The protein resides in the chloroplast. Binds directly to 23S ribosomal RNA and is necessary for the in vitro assembly process of the 50S ribosomal subunit. It is not involved in the protein synthesizing functions of that subunit. The sequence is that of Large ribosomal subunit protein bL20c from Morus indica (Mulberry).